Here is a 493-residue protein sequence, read N- to C-terminus: Probable UTP--glucose-1-phosphate uridylyltransferase (493 aa).

Residues 105–108, Q181, G211, and D242 contribute to the UTP site; that span reads LTGK. 107 to 108 serves as a coordination point for substrate; that stretch reads GK. 240-242 is a binding site for substrate; it reads NVD.

It belongs to the UDPGP type 1 family.

The enzyme catalyses alpha-D-glucose 1-phosphate + UTP + H(+) = UDP-alpha-D-glucose + diphosphate. Functionally, plays a central role as a glucosyl donor in cellular metabolic pathways. The protein is Probable UTP--glucose-1-phosphate uridylyltransferase of Saccharomyces cerevisiae (strain ATCC 204508 / S288c) (Baker's yeast).